The chain runs to 344 residues: Probable dual-specificity RNA methyltransferase RlmN (344 aa).

Catalysis depends on glutamate 90, which acts as the Proton acceptor. Residues 96 to 326 form the Radical SAM core domain; the sequence is YKYGNAICIS…VTIRRELGSS (231 aa). Cysteine 103 and cysteine 331 are joined by a disulfide. Cysteine 110, cysteine 114, and cysteine 117 together coordinate [4Fe-4S] cluster. Residues 157 to 158, serine 189, 212 to 214, and asparagine 288 each bind S-adenosyl-L-methionine; these read GE and SLH. The S-methylcysteine intermediate role is filled by cysteine 331.

It belongs to the radical SAM superfamily. RlmN family. Requires [4Fe-4S] cluster as cofactor.

The protein localises to the cytoplasm. It catalyses the reaction adenosine(2503) in 23S rRNA + 2 reduced [2Fe-2S]-[ferredoxin] + 2 S-adenosyl-L-methionine = 2-methyladenosine(2503) in 23S rRNA + 5'-deoxyadenosine + L-methionine + 2 oxidized [2Fe-2S]-[ferredoxin] + S-adenosyl-L-homocysteine. The enzyme catalyses adenosine(37) in tRNA + 2 reduced [2Fe-2S]-[ferredoxin] + 2 S-adenosyl-L-methionine = 2-methyladenosine(37) in tRNA + 5'-deoxyadenosine + L-methionine + 2 oxidized [2Fe-2S]-[ferredoxin] + S-adenosyl-L-homocysteine. In terms of biological role, specifically methylates position 2 of adenine 2503 in 23S rRNA and position 2 of adenine 37 in tRNAs. The protein is Probable dual-specificity RNA methyltransferase RlmN of Caldicellulosiruptor saccharolyticus (strain ATCC 43494 / DSM 8903 / Tp8T 6331).